Here is a 202-residue protein sequence, read N- to C-terminus: Holliday junction branch migration complex subunit RuvA (202 aa).

The segment at 1–62 is domain I; the sequence is MYEYLHGLIT…DTAQTLYGFS (62 aa). Positions 63–141 are domain II; it reads DFAEKQLFLK…DLAPATDDNT (79 aa). The tract at residues 142 to 151 is flexible linker; that stretch reads LFTPEVAPTT. A domain III region spans residues 152–202; sequence TENPQLADALAALTALGYRETAVKKITAQLRQFNGQTTNDYLSEGLRLLTK.

The protein belongs to the RuvA family. As to quaternary structure, homotetramer. Forms an RuvA(8)-RuvB(12)-Holliday junction (HJ) complex. HJ DNA is sandwiched between 2 RuvA tetramers; dsDNA enters through RuvA and exits via RuvB. An RuvB hexamer assembles on each DNA strand where it exits the tetramer. Each RuvB hexamer is contacted by two RuvA subunits (via domain III) on 2 adjacent RuvB subunits; this complex drives branch migration. In the full resolvosome a probable DNA-RuvA(4)-RuvB(12)-RuvC(2) complex forms which resolves the HJ.

It localises to the cytoplasm. Its function is as follows. The RuvA-RuvB-RuvC complex processes Holliday junction (HJ) DNA during genetic recombination and DNA repair, while the RuvA-RuvB complex plays an important role in the rescue of blocked DNA replication forks via replication fork reversal (RFR). RuvA specifically binds to HJ cruciform DNA, conferring on it an open structure. The RuvB hexamer acts as an ATP-dependent pump, pulling dsDNA into and through the RuvAB complex. HJ branch migration allows RuvC to scan DNA until it finds its consensus sequence, where it cleaves and resolves the cruciform DNA. This is Holliday junction branch migration complex subunit RuvA from Levilactobacillus brevis (strain ATCC 367 / BCRC 12310 / CIP 105137 / JCM 1170 / LMG 11437 / NCIMB 947 / NCTC 947) (Lactobacillus brevis).